The following is a 157-amino-acid chain: Dihydrofolate reductase type 1 (157 aa).

The region spanning 2-156 (KLSLMVAISK…INYSYQIWQK (155 aa)) is the DHFR domain.

Belongs to the dihydrofolate reductase family. In terms of assembly, homodimer.

The enzyme catalyses (6S)-5,6,7,8-tetrahydrofolate + NADP(+) = 7,8-dihydrofolate + NADPH + H(+). Its pathway is cofactor biosynthesis; tetrahydrofolate biosynthesis; 5,6,7,8-tetrahydrofolate from 7,8-dihydrofolate: step 1/1. Functionally, key enzyme in folate metabolism. Catalyzes an essential reaction for de novo glycine and purine synthesis, and for DNA precursor synthesis. The chain is Dihydrofolate reductase type 1 (dhfrI) from Escherichia coli.